Here is a 460-residue protein sequence, read N- to C-terminus: ATP synthase subunit beta (460 aa).

150 to 157 provides a ligand contact to ATP; it reads GGAGVGKT.

It belongs to the ATPase alpha/beta chains family. As to quaternary structure, F-type ATPases have 2 components, CF(1) - the catalytic core - and CF(0) - the membrane proton channel. CF(1) has five subunits: alpha(3), beta(3), gamma(1), delta(1), epsilon(1). CF(0) has three main subunits: a(1), b(2) and c(9-12). The alpha and beta chains form an alternating ring which encloses part of the gamma chain. CF(1) is attached to CF(0) by a central stalk formed by the gamma and epsilon chains, while a peripheral stalk is formed by the delta and b chains.

It is found in the cell inner membrane. The catalysed reaction is ATP + H2O + 4 H(+)(in) = ADP + phosphate + 5 H(+)(out). In terms of biological role, produces ATP from ADP in the presence of a proton gradient across the membrane. The catalytic sites are hosted primarily by the beta subunits. This is ATP synthase subunit beta from Pectobacterium carotovorum subsp. carotovorum (strain PC1).